The primary structure comprises 398 residues: Chalcone synthase (398 aa).

The active site involves Cys169.

This sequence belongs to the thiolase-like superfamily. Chalcone/stilbene synthases family.

It carries out the reaction (E)-4-coumaroyl-CoA + 3 malonyl-CoA + 3 H(+) = 2',4,4',6'-tetrahydroxychalcone + 3 CO2 + 4 CoA. It functions in the pathway secondary metabolite biosynthesis; flavonoid biosynthesis. Functionally, the primary product of this enzyme is 4,2',4',6'-tetrahydroxychalcone (also termed naringenin-chalcone or chalcone) which can under specific conditions spontaneously isomerize into naringenin. This Petroselinum crispum (Parsley) protein is Chalcone synthase (CHS).